The following is a 339-amino-acid chain: Flap endonuclease 1 (339 aa).

The tract at residues 1-99 is N-domain; sequence MGVNLKEIVD…VAWEKRKKHK (99 aa). Positions 29, 81, 153, 155, 174, 176, and 237 each coordinate Mg(2+). An I-domain region spans residues 117–258; it reads EAIKYAKSLG…TAIEIVKRFG (142 aa). The tract at residues 329–337 is interaction with PCNA; sequence NQKTLFSFF.

The protein belongs to the XPG/RAD2 endonuclease family. FEN1 subfamily. As to quaternary structure, interacts with PCNA. PCNA stimulates the nuclease activity without altering cleavage specificity. The cofactor is Mg(2+).

Structure-specific nuclease with 5'-flap endonuclease and 5'-3' exonuclease activities involved in DNA replication and repair. During DNA replication, cleaves the 5'-overhanging flap structure that is generated by displacement synthesis when DNA polymerase encounters the 5'-end of a downstream Okazaki fragment. Binds the unpaired 3'-DNA end and kinks the DNA to facilitate 5' cleavage specificity. Cleaves one nucleotide into the double-stranded DNA from the junction in flap DNA, leaving a nick for ligation. Also involved in the base excision repair (BER) pathway. Acts as a genome stabilization factor that prevents flaps from equilibrating into structures that lead to duplications and deletions. Also possesses 5'-3' exonuclease activity on nicked or gapped double-stranded DNA. This is Flap endonuclease 1 from Nanoarchaeum equitans (strain Kin4-M).